Consider the following 591-residue polypeptide: Protein NRT1/ PTR FAMILY 4.3 (591 aa).

Over residues 1–10 (MAEINKQSNK) the composition is skewed to polar residues. Residues 1 to 38 (MAEINKQSNKWEQEEVSNENNWELAEEESVDWRGRPSN) form a disordered region. Transmembrane regions (helical) follow at residues 47–67 (AALFVLGLQAFEIMGIAAVGN), 85–105 (ANIVTNFVGTIFIFALLGGYL), 109–129 (FLGSFWTIIIFGFVELSGFIL), 157–177 (GFKAMIFFMALYLVALGSGCV), 204–224 (FNAAYFAFSMGELIALTLLVW), 233–253 (IGFGVSAAAMTMGIISLVSGT), 347–367 (LISLVPIFASTIVFNTILAQL), 395–415 (AIPYIMLIFLVPLYDSFLVPF), 429–449 (LTRIGIGLFLSTFSMVSAAML), 463–483 (ILSIFWITPQFLIFGISEMFT), 502–522 (FLMALTYCSYSFGFYFSSVLV), and 551–571 (LFYWLLAVLSLLNFLSYLFWS).

It belongs to the major facilitator superfamily. Proton-dependent oligopeptide transporter (POT/PTR) (TC 2.A.17) family. In terms of tissue distribution, expressed in flowers. Detected in roots and siliques.

Its subcellular location is the membrane. The polypeptide is Protein NRT1/ PTR FAMILY 4.3 (NPF4.3) (Arabidopsis thaliana (Mouse-ear cress)).